The primary structure comprises 492 residues: Ribose import ATP-binding protein RbsA (492 aa).

2 consecutive ABC transporter domains span residues Ile3–Ser239 and Ala249–Lys492. An ATP-binding site is contributed by Gly35–Ser42.

This sequence belongs to the ABC transporter superfamily. Ribose importer (TC 3.A.1.2.1) family. As to quaternary structure, the complex is composed of an ATP-binding protein (RbsA), two transmembrane proteins (RbsC) and a solute-binding protein (RbsB).

It is found in the cell membrane. It catalyses the reaction D-ribose(out) + ATP + H2O = D-ribose(in) + ADP + phosphate + H(+). Functionally, part of the ABC transporter complex RbsABC involved in ribose import. Responsible for energy coupling to the transport system. This is Ribose import ATP-binding protein RbsA from Lactococcus lactis subsp. cremoris (strain SK11).